We begin with the raw amino-acid sequence, 510 residues long: uncharacterized protein (510 aa).

4 disordered regions span residues Met-1–Leu-154, Asp-208–Ala-227, Thr-234–Leu-276, and Asn-368–Arg-480. The residue at position 43 (Ser-43) is a Phosphoserine. The segment covering Pro-50–Ala-60 has biased composition (polar residues). The segment covering Glu-78–Gly-92 has biased composition (basic and acidic residues). The residue at position 84 (Ser-84) is a Phosphoserine. 2 stretches are compositionally biased toward polar residues: residues Ser-97–Asn-109 and Gln-118–Arg-135. Ser-120 carries the post-translational modification Phosphoserine. A compositionally biased stretch (low complexity) spans Ala-139–Ala-151. Low complexity predominate over residues Ser-243–Gly-255. The segment covering Arg-379–Arg-395 has biased composition (basic and acidic residues). Positions Ser-414–Ser-441 are enriched in polar residues.

This is an uncharacterized protein from Rattus norvegicus (Rat).